We begin with the raw amino-acid sequence, 37 residues long: Large ribosomal subunit protein bL36 (37 aa).

It belongs to the bacterial ribosomal protein bL36 family.

The sequence is that of Large ribosomal subunit protein bL36 from Dechloromonas aromatica (strain RCB).